A 119-amino-acid chain; its full sequence is Large ribosomal subunit protein bL20 (119 aa).

This sequence belongs to the bacterial ribosomal protein bL20 family.

In terms of biological role, binds directly to 23S ribosomal RNA and is necessary for the in vitro assembly process of the 50S ribosomal subunit. It is not involved in the protein synthesizing functions of that subunit. The sequence is that of Large ribosomal subunit protein bL20 (rplT) from Geobacillus stearothermophilus (Bacillus stearothermophilus).